The sequence spans 93 residues: MIKENTYFEGGVKSLAFNQSGADVSVGVMAAGEYTFGTAAPEKMTVVKGALIVKRVGDDDWTTFQSGESFDVAGDSSFDLQVKEATAYLCEYL.

This sequence belongs to the nucleoside phosphorylase PpnP family.

It carries out the reaction a purine D-ribonucleoside + phosphate = a purine nucleobase + alpha-D-ribose 1-phosphate. The catalysed reaction is adenosine + phosphate = alpha-D-ribose 1-phosphate + adenine. The enzyme catalyses cytidine + phosphate = cytosine + alpha-D-ribose 1-phosphate. It catalyses the reaction guanosine + phosphate = alpha-D-ribose 1-phosphate + guanine. It carries out the reaction inosine + phosphate = alpha-D-ribose 1-phosphate + hypoxanthine. The catalysed reaction is thymidine + phosphate = 2-deoxy-alpha-D-ribose 1-phosphate + thymine. The enzyme catalyses uridine + phosphate = alpha-D-ribose 1-phosphate + uracil. It catalyses the reaction xanthosine + phosphate = alpha-D-ribose 1-phosphate + xanthine. Functionally, catalyzes the phosphorolysis of diverse nucleosides, yielding D-ribose 1-phosphate and the respective free bases. Can use uridine, adenosine, guanosine, cytidine, thymidine, inosine and xanthosine as substrates. Also catalyzes the reverse reactions. In Vibrio atlanticus (strain LGP32) (Vibrio splendidus (strain Mel32)), this protein is Pyrimidine/purine nucleoside phosphorylase.